Here is a 72-residue protein sequence, read N- to C-terminus: Cytochrome c oxidase subunit 8C, mitochondrial (72 aa).

The transit peptide at 1–29 directs the protein to the mitochondrion; sequence MSRLLQFCSSLLRHRVVLFSKPGHSGRLS. The Mitochondrial matrix segment spans residues 30-40; the sequence is HSESPQNQVLT. A helical membrane pass occupies residues 41–64; the sequence is PTESVVGIVVFFATFFIPAAYVMS. Residues 65-72 are Mitochondrial intermembrane-facing; it reads NLKFFKGE.

Belongs to the cytochrome c oxidase VIII family. As to quaternary structure, component of the cytochrome c oxidase (complex IV, CIV), a multisubunit enzyme composed of 14 subunits. The complex is composed of a catalytic core of 3 subunits MT-CO1, MT-CO2 and MT-CO3, encoded in the mitochondrial DNA, and 11 supernumerary subunits COX4I, COX5A, COX5B, COX6A, COX6B, COX6C, COX7A, COX7B, COX7C, COX8 and NDUFA4, which are encoded in the nuclear genome. The complex exists as a monomer or a dimer and forms supercomplexes (SCs) in the inner mitochondrial membrane with NADH-ubiquinone oxidoreductase (complex I, CI) and ubiquinol-cytochrome c oxidoreductase (cytochrome b-c1 complex, complex III, CIII), resulting in different assemblies (supercomplex SCI(1)III(2)IV(1) and megacomplex MCI(2)III(2)IV(2)).

The protein resides in the mitochondrion inner membrane. It functions in the pathway energy metabolism; oxidative phosphorylation. Functionally, component of the cytochrome c oxidase, the last enzyme in the mitochondrial electron transport chain which drives oxidative phosphorylation. The respiratory chain contains 3 multisubunit complexes succinate dehydrogenase (complex II, CII), ubiquinol-cytochrome c oxidoreductase (cytochrome b-c1 complex, complex III, CIII) and cytochrome c oxidase (complex IV, CIV), that cooperate to transfer electrons derived from NADH and succinate to molecular oxygen, creating an electrochemical gradient over the inner membrane that drives transmembrane transport and the ATP synthase. Cytochrome c oxidase is the component of the respiratory chain that catalyzes the reduction of oxygen to water. Electrons originating from reduced cytochrome c in the intermembrane space (IMS) are transferred via the dinuclear copper A center (CU(A)) of subunit 2 and heme A of subunit 1 to the active site in subunit 1, a binuclear center (BNC) formed by heme A3 and copper B (CU(B)). The BNC reduces molecular oxygen to 2 water molecules using 4 electrons from cytochrome c in the IMS and 4 protons from the mitochondrial matrix. The chain is Cytochrome c oxidase subunit 8C, mitochondrial (Cox8c) from Rattus norvegicus (Rat).